The following is an 876-amino-acid chain: Alanine--tRNA ligase (876 aa).

Residues His-568, His-572, Cys-670, and His-674 each contribute to the Zn(2+) site.

The protein belongs to the class-II aminoacyl-tRNA synthetase family. Zn(2+) is required as a cofactor.

Its subcellular location is the cytoplasm. The enzyme catalyses tRNA(Ala) + L-alanine + ATP = L-alanyl-tRNA(Ala) + AMP + diphosphate. Functionally, catalyzes the attachment of alanine to tRNA(Ala) in a two-step reaction: alanine is first activated by ATP to form Ala-AMP and then transferred to the acceptor end of tRNA(Ala). Also edits incorrectly charged Ser-tRNA(Ala) and Gly-tRNA(Ala) via its editing domain. The chain is Alanine--tRNA ligase from Geotalea uraniireducens (strain Rf4) (Geobacter uraniireducens).